The following is a 207-amino-acid chain: Cytochrome c biogenesis ATP-binding export protein CcmA (207 aa).

The ABC transporter domain maps to 2–204 (LECENLSCTR…TTIDIRNFNR (203 aa)). 34–41 (GPNGSGKT) lines the ATP pocket.

Belongs to the ABC transporter superfamily. CcmA exporter (TC 3.A.1.107) family. In terms of assembly, the complex is composed of two ATP-binding proteins (CcmA) and two transmembrane proteins (CcmB).

It localises to the cell membrane. The enzyme catalyses heme b(in) + ATP + H2O = heme b(out) + ADP + phosphate + H(+). In terms of biological role, part of the ABC transporter complex CcmAB involved in the biogenesis of c-type cytochromes; once thought to export heme, this seems not to be the case, but its exact role is uncertain. Responsible for energy coupling to the transport system. The sequence is that of Cytochrome c biogenesis ATP-binding export protein CcmA from Wolbachia pipientis wMel.